An 875-amino-acid polypeptide reads, in one-letter code: GATOR2 complex protein MIOS (875 aa).

WD repeat units lie at residues 58–100 (SDTP…NSKF), 111–155 (KHAR…TPDI), 182–221 (GQND…QKMF), 223–261 (NTKA…KPVL), 265–306 (EQPK…TPIG), 320–360 (PCDN…SLAW), and 395–437 (RLRA…KQYT). A C4-type zinc finger spans residues 735–781 (VSCNFCGKSISYSCSSVPHQGRGFSQYGVSGSPTKSKVTSCPGCRKP). Residues C737 and C740 each coordinate Zn(2+). Phosphoserine is present on residues S759 and S766. Residues C775, C778, C788, C827, C830, H832, H835, H838, C849, C854, and C858 each coordinate Zn(2+). The RING-type; atypical zinc finger occupies 782–863 (LPRCALCLIN…CTCKCMQLDT (82 aa)).

This sequence belongs to the WD repeat mio family. Component of the GATOR2 subcomplex, composed of MIOS, SEC13, SEH1L, WDR24 and WDR59. The GATOR2 complex interacts with CASTOR1 and CASTOR2; the interaction is negatively regulated by arginine. CASTOR1 and CASTOR2 convey leucine availability via direct interaction with MIOS. The GATOR2 complex interacts with SESN1, SESN2 and SESN3; the interaction is negatively regulated by amino acids. Interacts with SAR1A and SAR1B; the interaction is direct, disrupted by leucine and mediates the interaction of SAR1A or SAR1B with the GATOR2 complex to negatively regulate the TORC1 signaling upon leucine deprivation. Widely expressed. In brain, expressed in neurons and glia (oligodendrocytes and astrocytes), with more abundance in neurons.

The protein resides in the lysosome membrane. Its activity is regulated as follows. The GATOR2 complex is negatively regulated by the upstream amino acid sensors CASTOR1 and SESN2, which sequester the GATOR2 complex in absence of amino acids. In the presence of abundant amino acids, GATOR2 is released from CASTOR1 and SESN2 and activated. As a component of the GATOR2 complex, functions as an activator of the amino acid-sensing branch of the mTORC1 signaling pathway. The GATOR2 complex indirectly activates mTORC1 through the inhibition of the GATOR1 subcomplex. GATOR2 probably acts as an E3 ubiquitin-protein ligase toward GATOR1. In the presence of abundant amino acids, the GATOR2 complex mediates ubiquitination of the NPRL2 core component of the GATOR1 complex, leading to GATOR1 inactivation. In the absence of amino acids, GATOR2 is inhibited, activating the GATOR1 complex. Within the GATOR2 complex, MIOS is required to prevent autoubiquitination of WDR24, the catalytic subunit of the complex. The GATOR2 complex is required for brain myelination. This is GATOR2 complex protein MIOS from Mus musculus (Mouse).